A 352-amino-acid chain; its full sequence is tRNA pseudouridine synthase D (352 aa).

D81 serves as the catalytic Nucleophile. One can recognise a TRUD domain in the interval 157 to 303 (GVPNYFGLQR…MAHERRILRL (147 aa)).

Belongs to the pseudouridine synthase TruD family.

It catalyses the reaction uridine(13) in tRNA = pseudouridine(13) in tRNA. Responsible for synthesis of pseudouridine from uracil-13 in transfer RNAs. The chain is tRNA pseudouridine synthase D from Ectopseudomonas mendocina (strain ymp) (Pseudomonas mendocina).